A 652-amino-acid chain; its full sequence is DNA ligase (652 aa).

NAD(+)-binding positions include 29-33, 78-79, and Glu107; these read DSEYD and SL. Residue Lys109 is the N6-AMP-lysine intermediate of the active site. Positions 130, 164, 278, and 302 each coordinate NAD(+). Residues Cys395, Cys398, Cys413, and Cys418 each contribute to the Zn(2+) site. Residues 577 to 652 enclose the BRCT domain; that stretch reads VADAALSGLT…VRDEAWLESL (76 aa).

It belongs to the NAD-dependent DNA ligase family. LigA subfamily. Mg(2+) is required as a cofactor. Requires Mn(2+) as cofactor.

It carries out the reaction NAD(+) + (deoxyribonucleotide)n-3'-hydroxyl + 5'-phospho-(deoxyribonucleotide)m = (deoxyribonucleotide)n+m + AMP + beta-nicotinamide D-nucleotide.. Its function is as follows. DNA ligase that catalyzes the formation of phosphodiester linkages between 5'-phosphoryl and 3'-hydroxyl groups in double-stranded DNA using NAD as a coenzyme and as the energy source for the reaction. It is essential for DNA replication and repair of damaged DNA. This is DNA ligase from Streptococcus pneumoniae serotype 2 (strain D39 / NCTC 7466).